Reading from the N-terminus, the 52-residue chain is uncharacterized protein (52 aa).

This is an uncharacterized protein from Caenorhabditis elegans.